We begin with the raw amino-acid sequence, 325 residues long: Electron transfer flavoprotein subunit alpha (325 aa).

262–290 serves as a coordination point for FAD; it reads LYIACGISGAIQHLAGMSNSKVIVAINKD.

Belongs to the ETF alpha-subunit/FixB family. Heterodimer of an alpha and a beta subunit. FAD serves as cofactor.

The electron transfer flavoprotein serves as a specific electron acceptor for other dehydrogenases. It transfers the electrons to the main respiratory chain via ETF-ubiquinone oxidoreductase (ETF dehydrogenase). The sequence is that of Electron transfer flavoprotein subunit alpha (etfA) from Bacillus subtilis (strain 168).